We begin with the raw amino-acid sequence, 560 residues long: Dihydroxy-acid dehydratase (560 aa).

C50 contacts [2Fe-2S] cluster. Position 82 (D82) interacts with Mg(2+). C123 is a [2Fe-2S] cluster binding site. 2 residues coordinate Mg(2+): D124 and K125. K125 is modified (N6-carboxylysine). C195 is a [2Fe-2S] cluster binding site. E447 is a Mg(2+) binding site. Catalysis depends on S473, which acts as the Proton acceptor.

This sequence belongs to the IlvD/Edd family. Homodimer. It depends on [2Fe-2S] cluster as a cofactor. Mg(2+) serves as cofactor.

It carries out the reaction (2R)-2,3-dihydroxy-3-methylbutanoate = 3-methyl-2-oxobutanoate + H2O. It catalyses the reaction (2R,3R)-2,3-dihydroxy-3-methylpentanoate = (S)-3-methyl-2-oxopentanoate + H2O. The protein operates within amino-acid biosynthesis; L-isoleucine biosynthesis; L-isoleucine from 2-oxobutanoate: step 3/4. It functions in the pathway amino-acid biosynthesis; L-valine biosynthesis; L-valine from pyruvate: step 3/4. Its function is as follows. Functions in the biosynthesis of branched-chain amino acids. Catalyzes the dehydration of (2R,3R)-2,3-dihydroxy-3-methylpentanoate (2,3-dihydroxy-3-methylvalerate) into 2-oxo-3-methylpentanoate (2-oxo-3-methylvalerate) and of (2R)-2,3-dihydroxy-3-methylbutanoate (2,3-dihydroxyisovalerate) into 2-oxo-3-methylbutanoate (2-oxoisovalerate), the penultimate precursor to L-isoleucine and L-valine, respectively. The protein is Dihydroxy-acid dehydratase of Methylibium petroleiphilum (strain ATCC BAA-1232 / LMG 22953 / PM1).